Consider the following 529-residue polypeptide: MSNTPFLSEVSKRRTFAIISHPDAGKTTITEKVLLFGNAIQKAGTVKGRGNAQHAKSDWMEMEKERGISVTTSVMQFPYNDCLVNLLDTPGHEDFSEDTYRTLTAVDSCLMVIDAAKGVEDRTRKLMEVTRLRDTPIVTFMNKLDRDVRDPMEVLDEVENELGMMCAPITWPIGCGKEFKGVYHIHRDETILYESGHGHEIQEVRIIKGLDNPELDEKVGESLAASVREELELVMGACPEFDKELFLTGELTPVYFGTALGNFGVDHMLDGLTEWAPAPKTRQAVERDVEATEDKFSGFVFKIQANMDPKHRDRIAFMRIVSGTYTQGMKMNHVRLGKQVSISDAVTFMAGDRSRAEHAYAGDIIGLHNHGTIQIGDTFTQGESLKFSGIPNFAPELFRRIRLKDPLKQKQLLKGLVQLSEEGAVQVFRPLQNNDLIVGAVGVLQFDVVVARLKSEYNVEAIYEGVNVATARWVECGDAKKLDEFQRKNQANLALDGGDNLTYIAPTMVNLNLAKERFPDVEFRATREH.

The region spanning 11–280 (SKRRTFAIIS…GLTEWAPAPK (270 aa)) is the tr-type G domain. GTP contacts are provided by residues 20–27 (SHPDAGKT), 88–92 (DTPGH), and 142–145 (NKLD).

The protein belongs to the TRAFAC class translation factor GTPase superfamily. Classic translation factor GTPase family. PrfC subfamily.

Its subcellular location is the cytoplasm. Increases the formation of ribosomal termination complexes and stimulates activities of RF-1 and RF-2. It binds guanine nucleotides and has strong preference for UGA stop codons. It may interact directly with the ribosome. The stimulation of RF-1 and RF-2 is significantly reduced by GTP and GDP, but not by GMP. This is Peptide chain release factor 3 from Vibrio parahaemolyticus serotype O3:K6 (strain RIMD 2210633).